We begin with the raw amino-acid sequence, 534 residues long: Endoglucanase 5 (534 aa).

The signal sequence occupies residues 1-27 (MSDVSGRFVVAAAVVAVSLAMAAAAAA). The active-site Nucleophile is the Asp-82. Active-site residues include His-432, Asp-484, and Glu-493. Residues 515-534 (RRRGEDAPPSSTSPVAEDDL) are disordered.

The protein belongs to the glycosyl hydrolase 9 (cellulase E) family.

The protein resides in the secreted. The enzyme catalyses Endohydrolysis of (1-&gt;4)-beta-D-glucosidic linkages in cellulose, lichenin and cereal beta-D-glucans.. The protein is Endoglucanase 5 of Oryza sativa subsp. japonica (Rice).